The sequence spans 590 residues: UvrABC system protein C (590 aa).

The GIY-YIG domain maps to 14–91 (DQPGCYLMKD…IKKYDPKYNV (78 aa)). The UVR domain occupies 196-231 (NEIKKELEAKMAEAAEKLEFERAKEFRDQLAHIEST).

It belongs to the UvrC family. Interacts with UvrB in an incision complex.

It is found in the cytoplasm. Functionally, the UvrABC repair system catalyzes the recognition and processing of DNA lesions. UvrC both incises the 5' and 3' sides of the lesion. The N-terminal half is responsible for the 3' incision and the C-terminal half is responsible for the 5' incision. The protein is UvrABC system protein C of Bacillus velezensis (strain DSM 23117 / BGSC 10A6 / LMG 26770 / FZB42) (Bacillus amyloliquefaciens subsp. plantarum).